Consider the following 282-residue polypeptide: ATP phosphoribosyltransferase (282 aa).

Belongs to the ATP phosphoribosyltransferase family. Long subfamily. It depends on Mg(2+) as a cofactor.

The protein localises to the cytoplasm. It catalyses the reaction 1-(5-phospho-beta-D-ribosyl)-ATP + diphosphate = 5-phospho-alpha-D-ribose 1-diphosphate + ATP. The protein operates within amino-acid biosynthesis; L-histidine biosynthesis; L-histidine from 5-phospho-alpha-D-ribose 1-diphosphate: step 1/9. With respect to regulation, feedback inhibited by histidine. In terms of biological role, catalyzes the condensation of ATP and 5-phosphoribose 1-diphosphate to form N'-(5'-phosphoribosyl)-ATP (PR-ATP). Has a crucial role in the pathway because the rate of histidine biosynthesis seems to be controlled primarily by regulation of HisG enzymatic activity. The chain is ATP phosphoribosyltransferase from Pyrobaculum aerophilum (strain ATCC 51768 / DSM 7523 / JCM 9630 / CIP 104966 / NBRC 100827 / IM2).